The chain runs to 526 residues: Light-independent protochlorophyllide reductase subunit B (526 aa).

Residue aspartate 36 coordinates [4Fe-4S] cluster. Aspartate 284 functions as the Proton donor in the catalytic mechanism. Residue 419–420 participates in substrate binding; sequence GL.

This sequence belongs to the ChlB/BchB/BchZ family. In terms of assembly, protochlorophyllide reductase is composed of three subunits; BchL, BchN and BchB. Forms a heterotetramer of two BchB and two BchN subunits. It depends on [4Fe-4S] cluster as a cofactor.

It carries out the reaction chlorophyllide a + oxidized 2[4Fe-4S]-[ferredoxin] + 2 ADP + 2 phosphate = protochlorophyllide a + reduced 2[4Fe-4S]-[ferredoxin] + 2 ATP + 2 H2O. Its pathway is porphyrin-containing compound metabolism; bacteriochlorophyll biosynthesis (light-independent). Its function is as follows. Component of the dark-operative protochlorophyllide reductase (DPOR) that uses Mg-ATP and reduced ferredoxin to reduce ring D of protochlorophyllide (Pchlide) to form chlorophyllide a (Chlide). This reaction is light-independent. The NB-protein (BchN-BchB) is the catalytic component of the complex. The polypeptide is Light-independent protochlorophyllide reductase subunit B (Halorhodospira halophila (strain DSM 244 / SL1) (Ectothiorhodospira halophila (strain DSM 244 / SL1))).